A 224-amino-acid polypeptide reads, in one-letter code: MSPTFNASPNQLTLALSKGRIFTETLPLLEAAGIRVTEDPETSRKLILPTSDPAVRVVIVRASDVPTYVQYGAADFGVAGKDVLMESGMAGLYAPIDLNIARCRMSVAVPAGFDYANAVRQGARLAVATKYVQTAREHFAKKGVHVDLIKLYGSMELGPLVGLSDAIVDLVSTGSTLRANNLVEVEEIVQISSRLVVNQAALKLKRERLAPILDAFERASAALA.

Belongs to the ATP phosphoribosyltransferase family. Short subfamily. As to quaternary structure, heteromultimer composed of HisG and HisZ subunits.

It is found in the cytoplasm. It catalyses the reaction 1-(5-phospho-beta-D-ribosyl)-ATP + diphosphate = 5-phospho-alpha-D-ribose 1-diphosphate + ATP. The protein operates within amino-acid biosynthesis; L-histidine biosynthesis; L-histidine from 5-phospho-alpha-D-ribose 1-diphosphate: step 1/9. Functionally, catalyzes the condensation of ATP and 5-phosphoribose 1-diphosphate to form N'-(5'-phosphoribosyl)-ATP (PR-ATP). Has a crucial role in the pathway because the rate of histidine biosynthesis seems to be controlled primarily by regulation of HisG enzymatic activity. The protein is ATP phosphoribosyltransferase of Cupriavidus necator (strain ATCC 17699 / DSM 428 / KCTC 22496 / NCIMB 10442 / H16 / Stanier 337) (Ralstonia eutropha).